The chain runs to 278 residues: Biotin synthase (278 aa).

One can recognise a Radical SAM core domain in the interval Met1–Arg227. Residues Cys16, Cys20, and Cys23 each coordinate [4Fe-4S] cluster. The [2Fe-2S] cluster site is built by Cys60, Cys95, and Cys153.

The protein belongs to the radical SAM superfamily. Biotin synthase family. Homodimer. [4Fe-4S] cluster serves as cofactor. Requires [2Fe-2S] cluster as cofactor.

It catalyses the reaction (4R,5S)-dethiobiotin + (sulfur carrier)-SH + 2 reduced [2Fe-2S]-[ferredoxin] + 2 S-adenosyl-L-methionine = (sulfur carrier)-H + biotin + 2 5'-deoxyadenosine + 2 L-methionine + 2 oxidized [2Fe-2S]-[ferredoxin]. It functions in the pathway cofactor biosynthesis; biotin biosynthesis; biotin from 7,8-diaminononanoate: step 2/2. Its function is as follows. Catalyzes the conversion of dethiobiotin (DTB) to biotin by the insertion of a sulfur atom into dethiobiotin via a radical-based mechanism. The chain is Biotin synthase from Campylobacter jejuni subsp. doylei (strain ATCC BAA-1458 / RM4099 / 269.97).